We begin with the raw amino-acid sequence, 113 residues long: Carrot ABA-induced in somatic embryos 3 (113 aa).

Basic and acidic residues-rich tracts occupy residues 1–17 (MASG…RAKQ), 32–52 (EAQE…KEQL), and 65–77 (GETR…KEGY). The segment at 1-113 (MASGQEKRSE…IDQSKFRTKS (113 aa)) is disordered.

This sequence belongs to the small hydrophilic plant seed protein family. As to expression, expressed in embryogenic cells, somatic embryos and seeds at the later stages of development. Not detected in leaves.

The sequence is that of Carrot ABA-induced in somatic embryos 3 from Daucus carota (Wild carrot).